We begin with the raw amino-acid sequence, 183 residues long: Translation initiation factor IF-3 (183 aa).

This sequence belongs to the IF-3 family. Monomer.

It is found in the cytoplasm. In terms of biological role, IF-3 binds to the 30S ribosomal subunit and shifts the equilibrium between 70S ribosomes and their 50S and 30S subunits in favor of the free subunits, thus enhancing the availability of 30S subunits on which protein synthesis initiation begins. This Aliivibrio salmonicida (strain LFI1238) (Vibrio salmonicida (strain LFI1238)) protein is Translation initiation factor IF-3.